The sequence spans 509 residues: MTAPHKVAFPARCAVNICYDKHLCSQVFPAGIPVEGFFEGMVELFDADLKRKGFDGVALPAGSYELHKINGVRLDINKSLDELGVQDGNTLVLVPRVAGESFEPQYESLSTGLAAMGKWLGRDGGDRMFAPVTSLTAAHTAMAIIAMAVGVVLALTLRTRTITDSPVPAAMAGGIGVLLVIGALVVWWGWRERRDLFSGFGWLAVVLLAVAAACAPPGALGAAHALIGLVVVVLGAITIGVATRKRWQTAVVTAVVTVCGILAAVAAVRMFRPVSMQVLAICVLVGLLVLIRMTPTVALWVARVRPPHFGSITGRDLFARRAGMPVDTVAPVSEADADDEDNELTDITARGTAIAASARLVNAVQVGMCVGVSLVLPAAVWGVLTPRQPWAWLALLVAGLTVGLFITQGRGFAAKYQAVALVCGASAAVCAGVLKYALDTPKGVQTGLLWPAIFVAAFAALGLAVALVVPATRFRPIIRLTVEWLEVLAMIALLPAAAALGGLFAWLRH.

The next 11 helical transmembrane spans lie at 135 to 155, 170 to 190, 196 to 216, 222 to 242, 248 to 268, 281 to 301, 364 to 384, 389 to 409, 418 to 438, 449 to 469, and 487 to 507; these read LTAA…VLAL, AMAG…WWGW, LFSG…ACAP, AAHA…IGVA, QTAV…VAAV, ICVL…ALWV, VQVG…WGVL, PWAW…ITQG, AVAL…KYAL, LWPA…ALVV, and VLAM…FAWL.

Belongs to the EccD/Snm4 family. In terms of assembly, part of the ESX-2 / type VII secretion system (T7SS), which is composed of cytosolic and membrane components.

The protein resides in the cell membrane. In Mycobacterium tuberculosis (strain CDC 1551 / Oshkosh), this protein is ESX-2 secretion system protein eccD2 (eccD2).